A 340-amino-acid polypeptide reads, in one-letter code: Biotin synthase (340 aa).

Residues 53-280 (SAIQLSSLLS…LARVRLSAGR (228 aa)) enclose the Radical SAM core domain. 3 residues coordinate [4Fe-4S] cluster: Cys-68, Cys-72, and Cys-75. [2Fe-2S] cluster contacts are provided by Cys-112, Cys-143, Cys-203, and Arg-275.

The protein belongs to the radical SAM superfamily. Biotin synthase family. In terms of assembly, homodimer. The cofactor is [4Fe-4S] cluster. [2Fe-2S] cluster serves as cofactor.

It carries out the reaction (4R,5S)-dethiobiotin + (sulfur carrier)-SH + 2 reduced [2Fe-2S]-[ferredoxin] + 2 S-adenosyl-L-methionine = (sulfur carrier)-H + biotin + 2 5'-deoxyadenosine + 2 L-methionine + 2 oxidized [2Fe-2S]-[ferredoxin]. It participates in cofactor biosynthesis; biotin biosynthesis; biotin from 7,8-diaminononanoate: step 2/2. In terms of biological role, catalyzes the conversion of dethiobiotin (DTB) to biotin by the insertion of a sulfur atom into dethiobiotin via a radical-based mechanism. The polypeptide is Biotin synthase (Bordetella petrii (strain ATCC BAA-461 / DSM 12804 / CCUG 43448)).